The primary structure comprises 249 residues: Proteasome subunit alpha type-7 (249 aa).

It belongs to the peptidase T1A family. In terms of assembly, the 26S proteasome consists of a 20S proteasome core and two 19S regulatory subunits. The 20S proteasome core is composed of 28 subunits that are arranged in four stacked rings, resulting in a barrel-shaped structure. The two end rings are each formed by seven alpha subunits, and the two central rings are each formed by seven beta subunits. The catalytic chamber with the active sites is on the inside of the barrel.

It is found in the cytoplasm. Its subcellular location is the nucleus. Its function is as follows. The proteasome is a multicatalytic proteinase complex which is characterized by its ability to cleave peptides with Arg, Phe, Tyr, Leu, and Glu adjacent to the leaving group at neutral or slightly basic pH. The proteasome has an ATP-dependent proteolytic activity. The sequence is that of Proteasome subunit alpha type-7 (PAD1) from Cicer arietinum (Chickpea).